Reading from the N-terminus, the 151-residue chain is Neuroglobin (151 aa).

Positions 1–149 (MERPEHELIR…VVQAMSRGWN (149 aa)) constitute a Globin domain. Heme b contacts are provided by His-64 and His-96.

This sequence belongs to the globin family. In terms of assembly, monomer. Homodimer and homotetramer; disulfide-linked. Mainly monomeric but also detected as part of homodimers and homotetramers. Interacts with 14-3-3 proteins; regulates the phosphorylation of NGB. Could interact (ferrous form) with G-alpha(i) proteins (GTP-bound form). Post-translationally, phosphorylated during hypoxia by ERK1/ERK2. Phosphorylation regulates the heme pocket hexacoordination preventing the association of His-64 with the heme metal center. Thereby, promotes the access of dioxygen and nitrite to the heme and stimulates the nitrite reductase activity. Phosphorylation during hypoxia is stabilized by 14-3-3 proteins.

It is found in the cytoplasm. The protein localises to the cytosol. Its subcellular location is the mitochondrion matrix. It catalyses the reaction Fe(III)-heme b-[protein] + nitric oxide + H2O = Fe(II)-heme b-[protein] + nitrite + 2 H(+). Monomeric globin with a bis-histidyl six-coordinate heme-iron atom through which it can bind dioxygen, carbon monoxide and nitric oxide. Could help transport oxygen and increase its availability to the metabolically active neuronal tissues, though its low quantity in tissues as well as its high affinity for dioxygen, which may limit its oxygen-releasing ability, argue against it. The ferrous/deoxygenated form exhibits a nitrite reductase activity and it could produce nitric oxide which in turn inhibits cellular respiration in response to hypoxia. In its ferrous/deoxygenated state, it may also exhibit GDI (Guanine nucleotide Dissociation Inhibitor) activity toward heterotrimeric G-alpha proteins, thereby regulating signal transduction to facilitate neuroprotective responses in the wake of hypoxia and associated oxidative stress. The chain is Neuroglobin from Sus scrofa (Pig).